We begin with the raw amino-acid sequence, 80 residues long: LTMMARKMKETDSEEEIREAFRVFDKDGNGFISAAELRHVMTNLGEKLTDEEVDEMIREADIDGDGQVNYEEFVAMMTSK.

2 consecutive EF-hand domains span residues 12 to 47 (DSEEEIREAFRVFDKDGNGFISAAELRHVMTNLGEK) and 48 to 80 (LTDEEVDEMIREADIDGDGQVNYEEFVAMMTSK). Ca(2+) contacts are provided by aspartate 25, aspartate 27, asparagine 29, glutamate 36, aspartate 61, aspartate 63, aspartate 65, glutamine 67, and glutamate 72.

It belongs to the calmodulin family.

Functionally, calmodulin mediates the control of a large number of enzymes, ion channels and other proteins by Ca(2+). Among the enzymes to be stimulated by the calmodulin-Ca(2+) complex are a number of protein kinases and phosphatases. The chain is Calmodulin from Strongylocentrotus purpuratus (Purple sea urchin).